The primary structure comprises 397 residues: Polyphosphatase (397 aa).

Mg(2+)-binding residues include aspartate 41, aspartate 127, and histidine 148. Mn(2+) is bound by residues aspartate 41, aspartate 127, and histidine 148. Positions 149, 286, and 381 each coordinate ATP.

The protein belongs to the PPase class C family. Requires Mn(2+) as cofactor. Mg(2+) is required as a cofactor.

It carries out the reaction [phosphate](n) + H2O = [phosphate](n-1) + phosphate + H(+). In terms of biological role, polyphosphatase (polyPase) involved in the degradation of inorganic polyphosphates (polyP) that is able to degrade a range of chains from three to several hundreds of residues in a highly processive manner. Exclusively shows exopolyphosphatase activity, cleaving inside the polyP chain. The polypeptide is Polyphosphatase (Saccharomyces cerevisiae (strain ATCC 204508 / S288c) (Baker's yeast)).